A 400-amino-acid polypeptide reads, in one-letter code: Chalcone synthase WHP1 (400 aa).

Cys167 is an active-site residue.

The protein belongs to the thiolase-like superfamily. Chalcone/stilbene synthases family.

The enzyme catalyses (E)-4-coumaroyl-CoA + 3 malonyl-CoA + 3 H(+) = 2',4,4',6'-tetrahydroxychalcone + 3 CO2 + 4 CoA. It functions in the pathway secondary metabolite biosynthesis; flavonoid biosynthesis. Its function is as follows. The primary product of this enzyme is 4,2',4',6'-tetrahydroxychalcone (also termed naringenin-chalcone or chalcone) which can under specific conditions spontaneously isomerize into naringenin. The sequence is that of Chalcone synthase WHP1 (WHP1) from Zea mays (Maize).